The sequence spans 476 residues: Cysteine--tRNA ligase (476 aa).

Zn(2+) is bound at residue C31. The 'HIGH' region signature appears at 33–43 (PTVYNYAHIGN). C211, H236, and E240 together coordinate Zn(2+). The 'KMSKS' region signature appears at 269–273 (KMSKS). K272 serves as a coordination point for ATP.

The protein belongs to the class-I aminoacyl-tRNA synthetase family. Monomer. Zn(2+) serves as cofactor.

The protein resides in the cytoplasm. The catalysed reaction is tRNA(Cys) + L-cysteine + ATP = L-cysteinyl-tRNA(Cys) + AMP + diphosphate. The chain is Cysteine--tRNA ligase from Xanthomonas euvesicatoria pv. vesicatoria (strain 85-10) (Xanthomonas campestris pv. vesicatoria).